The primary structure comprises 315 residues: Cytochrome f (315 aa).

Positions M1–A30 are cleaved as a signal peptide. Y31, C51, C54, and H55 together coordinate heme. A helical membrane pass occupies residues I281–L300.

It belongs to the cytochrome f family. As to quaternary structure, the 4 large subunits of the cytochrome b6-f complex are cytochrome b6, subunit IV (17 kDa polypeptide, petD), cytochrome f and the Rieske protein, while the 4 small subunits are PetG, PetL, PetM and PetN. The complex functions as a dimer. Requires heme as cofactor.

The protein resides in the plastid. It localises to the chloroplast thylakoid membrane. In terms of biological role, component of the cytochrome b6-f complex, which mediates electron transfer between photosystem II (PSII) and photosystem I (PSI), cyclic electron flow around PSI, and state transitions. This chain is Cytochrome f (petA), found in Chlorella vulgaris (Green alga).